Reading from the N-terminus, the 312-residue chain is Large ribosomal subunit protein uL10 (312 aa).

The segment at Ala-287–Asp-312 is disordered.

This sequence belongs to the universal ribosomal protein uL10 family. As to quaternary structure, P0 forms a pentameric complex by interaction with dimers of P1 and P2. In terms of processing, phosphorylated.

Its function is as follows. Ribosomal protein P0 is the functional equivalent of E.coli protein L10. The chain is Large ribosomal subunit protein uL10 from Caenorhabditis elegans.